The chain runs to 295 residues: GTP cyclohydrolase FolE2 (295 aa).

The protein belongs to the GTP cyclohydrolase IV family.

It catalyses the reaction GTP + H2O = 7,8-dihydroneopterin 3'-triphosphate + formate + H(+). Its pathway is cofactor biosynthesis; 7,8-dihydroneopterin triphosphate biosynthesis; 7,8-dihydroneopterin triphosphate from GTP: step 1/1. In terms of biological role, converts GTP to 7,8-dihydroneopterin triphosphate. This is GTP cyclohydrolase FolE2 from Pseudomonas putida (strain W619).